The following is a 497-amino-acid chain: Meiosis-specific serine/threonine-protein kinase MEK1 (497 aa).

In terms of domain architecture, FHA spans 47–102 (VKVGRNDKECQLVLTNPSISSVHCVFWCVFFDEDSIPMFYVKDCSLNGTYLNGLLL). The region spanning 162–444 (EITNRIVGNG…SKQGLKHIWI (283 aa)) is the Protein kinase domain. Residues 168-176 (VGNGTFGHV) and K199 each bind ATP. D290 serves as the catalytic Proton acceptor.

Belongs to the protein kinase superfamily. CAMK Ser/Thr protein kinase family. CHEK2 subfamily.

It carries out the reaction L-seryl-[protein] + ATP = O-phospho-L-seryl-[protein] + ADP + H(+). The catalysed reaction is L-threonyl-[protein] + ATP = O-phospho-L-threonyl-[protein] + ADP + H(+). Its function is as follows. Probable protein kinase required for meiotic recombination. The protein is Meiosis-specific serine/threonine-protein kinase MEK1 (MEK1) of Saccharomyces cerevisiae (strain ATCC 204508 / S288c) (Baker's yeast).